Consider the following 604-residue polypeptide: Ras guanine nucleotide exchange factor H (604 aa).

The span at 1-26 (MSNTNINVQSSTPKKSLGSSQYSLAG) shows a compositional bias: polar residues. Residues 1–61 (MSNTNINVQS…QENSIDDSGS (61 aa)) form a disordered region. Positions 27-49 (SSSSNLNNINNNNNNNNNNNNNS) are enriched in low complexity. Polar residues predominate over residues 50 to 61 (TGQENSIDDSGS). In terms of domain architecture, LisH spans 115 to 147 (NDTMLLKLIMQYFHEENLTTSLKKIQEETKVQF). The N-terminal Ras-GEF domain maps to 221 to 335 (PDGTIKAATF…AVINLKIENY (115 aa)). A Ras-GEF domain is found at 365 to 591 (DEEEIARQLC…EQPQLTLDLS (227 aa)).

In terms of assembly, component of the Sca1 complex composed of at least gefA, gefH, scaA, phr, and the protein phosphatase 2A subunits pppA and pho2B. Interacts directly with gefA and phr.

It localises to the cell membrane. Promotes the exchange of Ras-bound GDP by GTP. Component of the Sca1 complex, a regulator of cell motility, chemotaxis and signal relay. The Sca1 complex is recruited to the plasma membrane in a chemoattractant- and F-actin-dependent manner and is enriched at the leading edge of chemotaxing cells where it regulates F-actin dynamics and signal relay by controlling the activation of rasC and the downstream target of rapamycin complex 2 (TORC2)-Akt/protein kinase B (PKB) pathway. This chain is Ras guanine nucleotide exchange factor H (gefH), found in Dictyostelium discoideum (Social amoeba).